A 294-amino-acid chain; its full sequence is MKKTLLAASAVVALSASFTAGAAETEKPQYLSDWWHQSVNVVGSYHTRFGPQIRNDTYLEYEAFAKKDWFDFYGYIDAPVFFGGNSTAKGIWNKGSPLFMEIEPRFSIDKLTNTDLSFGPFKEWYFANNYIYDMGRNDSQEQSTWYMGLGTDIDTGLPMSLSLNIYAKYQWQNYGASNENEWDGYRFKVKYFVPLTDLWGGSLSYIGFTNFDWGSDLGDDNFYDMNGKHARTSNSIASSHILALNYAHWHYSIVARYFHNGGQWADDAKLNFGDGDFSVRSTGWGGYFVVGYNF.

The first 22 residues, 1-22 (MKKTLLAASAVVALSASFTAGA), serve as a signal peptide directing secretion.

The protein belongs to the nucleoside-specific channel-forming outer membrane porin (Tsx) (TC 1.B.10) family.

The protein resides in the cell outer membrane. In terms of biological role, functions as a substrate-specific channel for nucleosides and deoxynucleosides. Also functions in albicidin uptake and as receptor for colicin K. Also is a receptor for several Tsx-specific bacteriophages. This is Nucleoside-specific channel-forming protein Tsx from Klebsiella aerogenes (strain ATCC 13048 / DSM 30053 / CCUG 1429 / JCM 1235 / KCTC 2190 / NBRC 13534 / NCIMB 10102 / NCTC 10006 / CDC 819-56) (Enterobacter aerogenes).